We begin with the raw amino-acid sequence, 497 residues long: Probable cytosol aminopeptidase (497 aa).

Lys-268 and Asp-273 together coordinate Mn(2+). The active site involves Lys-280. The Mn(2+) site is built by Asp-291, Asp-350, and Glu-352. Arg-354 is an active-site residue.

This sequence belongs to the peptidase M17 family. The cofactor is Mn(2+).

It localises to the cytoplasm. The catalysed reaction is Release of an N-terminal amino acid, Xaa-|-Yaa-, in which Xaa is preferably Leu, but may be other amino acids including Pro although not Arg or Lys, and Yaa may be Pro. Amino acid amides and methyl esters are also readily hydrolyzed, but rates on arylamides are exceedingly low.. It catalyses the reaction Release of an N-terminal amino acid, preferentially leucine, but not glutamic or aspartic acids.. Functionally, presumably involved in the processing and regular turnover of intracellular proteins. Catalyzes the removal of unsubstituted N-terminal amino acids from various peptides. The sequence is that of Probable cytosol aminopeptidase from Alkalilimnicola ehrlichii (strain ATCC BAA-1101 / DSM 17681 / MLHE-1).